Reading from the N-terminus, the 753-residue chain is Centromere protein I (753 aa).

Over residues 1–15 (MQRRQSSKHSKRPLQ) the composition is skewed to basic residues. Positions 1–54 (MQRRQSSKHSKRPLQVHHSNQTDLSAWRKGGTVDTEKSAQNRQSLSDQKNDNEQ) are disordered.

It belongs to the CENP-I/CTF3 family. Component of the CENPA-HI complex, at least composed of CENPH, CENPI, CENPK, CENPL, CENPM, CENPO and CENPP.

It localises to the nucleus. The protein localises to the chromosome. It is found in the centromere. Component of the CENPA-HI complex, a centromeric complex involved in assembly of kinetochore proteins, mitotic progression and chromosome segregation. Required for the localization of CENPC but not CENPA to the centromere. It however may be involved in incorporation of newly synthesized CENPA into centromeres via its interaction with the CENPA-NAC complex. This is Centromere protein I (CENPI) from Gallus gallus (Chicken).